Here is a 334-residue protein sequence, read N- to C-terminus: Anthranilate phosphoribosyltransferase (334 aa).

5-phospho-alpha-D-ribose 1-diphosphate is bound by residues Gly-79, 82-83 (GD), Ser-87, 89-92 (NIST), 107-115 (KHGNRSISS), and Ser-119. Gly-79 provides a ligand contact to anthranilate. Residue Ser-91 coordinates Mg(2+). An anthranilate-binding site is contributed by Asn-110. Arg-165 is an anthranilate binding site. Mg(2+) is bound by residues Asp-224 and Glu-225.

The protein belongs to the anthranilate phosphoribosyltransferase family. In terms of assembly, homodimer. Mg(2+) is required as a cofactor.

It catalyses the reaction N-(5-phospho-beta-D-ribosyl)anthranilate + diphosphate = 5-phospho-alpha-D-ribose 1-diphosphate + anthranilate. The protein operates within amino-acid biosynthesis; L-tryptophan biosynthesis; L-tryptophan from chorismate: step 2/5. Functionally, catalyzes the transfer of the phosphoribosyl group of 5-phosphorylribose-1-pyrophosphate (PRPP) to anthranilate to yield N-(5'-phosphoribosyl)-anthranilate (PRA). The protein is Anthranilate phosphoribosyltransferase of Streptococcus sanguinis (strain SK36).